The sequence spans 138 residues: ATP synthase epsilon chain (138 aa).

The protein belongs to the ATPase epsilon chain family. In terms of assembly, F-type ATPases have 2 components, CF(1) - the catalytic core - and CF(0) - the membrane proton channel. CF(1) has five subunits: alpha(3), beta(3), gamma(1), delta(1), epsilon(1). CF(0) has three main subunits: a, b and c.

The protein resides in the cell membrane. In terms of biological role, produces ATP from ADP in the presence of a proton gradient across the membrane. This chain is ATP synthase epsilon chain, found in Streptococcus uberis (strain ATCC BAA-854 / 0140J).